The primary structure comprises 1160 residues: Nonribosomal peptide synthetase fmqC (1160 aa).

The interval 132-520 is adenylation; the sequence is TYRELNDRSS…LGEVEHALQQ (389 aa). The region spanning 642-719 is the Carrier domain; it reads QPVTQLEESL…EMAGMLDGVT (78 aa). Residue S679 is modified to O-(pantetheine 4'-phosphoryl)serine. A condensation region spans residues 749 to 1025; the sequence is CTLEDLQEGF…CAAAETPMRI (277 aa).

The protein belongs to the NRP synthetase family. In terms of assembly, interacts with the mitogen-activated protein kinase mpkA. In terms of processing, phosphorylated by mpkA during conidiogenesis.

It localises to the cytoplasm. The protein operates within alkaloid biosynthesis. Functionally, nonribosomal peptide synthetase; part of the gene cluster that mediates the biosynthesis of the antitumor fumiquinazolines that confer a dual-usage capability to defend against phagocytes in the environment and animal hosts. The simplest member is fumiquinazoline F (FQF) with a 6-6-6 tricyclic core derived from anthranilic acid (Ant), tryptophan (Trp), and alanine (Ala). The trimodular NRPS fmqA is responsible for FQF formation. Modules 1, 2 and 3 of fmqA are predicted to activate and load Ant, Trp and Ala, respectively, providing for the assembly of an Ant-Trp-Ala-S-enzyme intermediate that would undergo double cyclization for chain release and generation of the tricyclic 6-6-6 product fumiquinazoline F. The presence of an E domain predicted for module 2 of fmqA is consistent with epimerization of L-Trp to D-Trp during assembly to generate the R-stereocenter at C14 of FQF. The FAD-dependent monooxygenase fmqB and the monomodular NRPS fmqC then maturate FQF to FQA. FmqB oxidizes the 2',3'-double bond of the indole side chain of FQF, and fmqC activates L-Ala as the adenylate, installs it as the pantetheinyl thioester on its carrier protein domain, and acylates the oxidized indole for subsequent intramolecular cyclization to create the 6-5-5-imidazolindolone of FQA. The FAD-linked oxidoreductase fmqD introduces a third layer of scaffold complexity by converting FQA to the spirohemiaminal FQC, presumably by catalyzing the formation of a transient imine within the pyrazinone ring. FQC subsequently converts nonenzymatically to the known cyclic aminal FQD. This chain is Nonribosomal peptide synthetase fmqC, found in Aspergillus fumigatus (strain ATCC MYA-4609 / CBS 101355 / FGSC A1100 / Af293) (Neosartorya fumigata).